The sequence spans 85 residues: Large ribosomal subunit protein bL27 (85 aa).

This sequence belongs to the bacterial ribosomal protein bL27 family.

The polypeptide is Large ribosomal subunit protein bL27 (Sodalis glossinidius (strain morsitans)).